Reading from the N-terminus, the 361-residue chain is Chorismate synthase (361 aa).

Positions 48 and 54 each coordinate NADP(+). FMN contacts are provided by residues R125–S127, N238–A239, G278, K293–S297, and R319.

This sequence belongs to the chorismate synthase family. Homotetramer. FMNH2 serves as cofactor.

It catalyses the reaction 5-O-(1-carboxyvinyl)-3-phosphoshikimate = chorismate + phosphate. Its pathway is metabolic intermediate biosynthesis; chorismate biosynthesis; chorismate from D-erythrose 4-phosphate and phosphoenolpyruvate: step 7/7. Catalyzes the anti-1,4-elimination of the C-3 phosphate and the C-6 proR hydrogen from 5-enolpyruvylshikimate-3-phosphate (EPSP) to yield chorismate, which is the branch point compound that serves as the starting substrate for the three terminal pathways of aromatic amino acid biosynthesis. This reaction introduces a second double bond into the aromatic ring system. The polypeptide is Chorismate synthase (Shigella flexneri).